Consider the following 469-residue polypeptide: UDP-N-acetylmuramate--L-alanine ligase (469 aa).

Position 118 to 124 (118 to 124) interacts with ATP; sequence GTHGKTT.

Belongs to the MurCDEF family.

The protein resides in the cytoplasm. It carries out the reaction UDP-N-acetyl-alpha-D-muramate + L-alanine + ATP = UDP-N-acetyl-alpha-D-muramoyl-L-alanine + ADP + phosphate + H(+). It participates in cell wall biogenesis; peptidoglycan biosynthesis. Functionally, cell wall formation. The sequence is that of UDP-N-acetylmuramate--L-alanine ligase from Ruegeria sp. (strain TM1040) (Silicibacter sp.).